The chain runs to 122 residues: Ribosome-binding factor A (122 aa).

It belongs to the RbfA family. In terms of assembly, monomer. Binds 30S ribosomal subunits, but not 50S ribosomal subunits or 70S ribosomes.

It is found in the cytoplasm. In terms of biological role, one of several proteins that assist in the late maturation steps of the functional core of the 30S ribosomal subunit. Associates with free 30S ribosomal subunits (but not with 30S subunits that are part of 70S ribosomes or polysomes). Required for efficient processing of 16S rRNA. May interact with the 5'-terminal helix region of 16S rRNA. This chain is Ribosome-binding factor A, found in Dichelobacter nodosus (strain VCS1703A).